Here is an 832-residue protein sequence, read N- to C-terminus: Protein P (832 aa).

The terminal protein domain (TP) stretch occupies residues 1–177 (MPLSYQHFRK…FCGSPYSWEQ (177 aa)). A spacer region spans residues 178 to 335 (ELQHGAESFH…YCLSHLVSLL (158 aa)). A polymerase/reverse transcriptase domain (RT) region spans residues 336-679 (DDWGPCTEHG…YSTLYPVARQ (344 aa)). Positions 346–589 (EHHIRIPRTP…YSLHFMGYVI (244 aa)) constitute a Reverse transcriptase domain. 3 residues coordinate Mg(2+): Asp-418, Asp-540, and Asp-541.

The protein belongs to the hepadnaviridae P protein family.

It catalyses the reaction DNA(n) + a 2'-deoxyribonucleoside 5'-triphosphate = DNA(n+1) + diphosphate. The enzyme catalyses Endonucleolytic cleavage to 5'-phosphomonoester.. With respect to regulation, activated by host HSP70 and HSP40 in vitro to be able to bind the epsilon loop of the pgRNA. Because deletion of the RNase H region renders the protein partly chaperone-independent, the chaperones may be needed indirectly to relieve occlusion of the RNA-binding site by this domain. Inhibited by several reverse-transcriptase inhibitors: Lamivudine, Adefovir and Entecavir. Its function is as follows. Multifunctional enzyme that converts the viral RNA genome into dsDNA in viral cytoplasmic capsids. This enzyme displays a DNA polymerase activity that can copy either DNA or RNA templates, and a ribonuclease H (RNase H) activity that cleaves the RNA strand of RNA-DNA heteroduplexes in a partially processive 3'- to 5'-endonucleasic mode. Neo-synthesized pregenomic RNA (pgRNA) are encapsidated together with the P protein, and reverse-transcribed inside the nucleocapsid. Initiation of reverse-transcription occurs first by binding the epsilon loop on the pgRNA genome, and is initiated by protein priming, thereby the 5'-end of (-)DNA is covalently linked to P protein. Partial (+)DNA is synthesized from the (-)DNA template and generates the relaxed circular DNA (RC-DNA) genome. After budding and infection, the RC-DNA migrates in the nucleus, and is converted into a plasmid-like covalently closed circular DNA (cccDNA). The activity of P protein does not seem to be necessary for cccDNA generation, and is presumably released from (+)DNA by host nuclear DNA repair machinery. The chain is Protein P from Pan troglodytes (Chimpanzee).